A 551-amino-acid polypeptide reads, in one-letter code: Protein GPR107 (551 aa).

A signal peptide spans 1–33 (MAVRVPLGCTGSFCPRLLPLLALLELLVDPSLG). The Extracellular segment spans residues 34–262 (RVHHLALKDD…YLSAGEIPLP (229 aa)). An N-linked (GlcNAc...) asparagine glycan is attached at asparagine 64. Positions 127–183 (GVKVRSPPEAGKQLPEIVFSKDEKVPSRSQEPAVSSNPKDSKVQRTPDGSKAQRSTV) are disordered. The segment covering 153-164 (SRSQEPAVSSNP) has biased composition (polar residues). A glycan (N-linked (GlcNAc...) asparagine) is linked at asparagine 209. The chain crosses the membrane as a helical span at residues 263–283 (KLYVSMALLFFLSGTVWIHIL). The Cytoplasmic portion of the chain corresponds to 284 to 292 (RKRRNDVFK). Residues 293 to 313 (IHWLMAALPFTKSLSLVFHAI) form a helical membrane-spanning segment. Residues 314–336 (DYHYISSQGFPIEGWAVVYYITH) lie on the Extracellular side of the membrane. The helical transmembrane segment at 337-357 (LLKGALLFITIALIGTGWAFI) threads the bilayer. The Cytoplasmic portion of the chain corresponds to 358 to 367 (KHILSDKDKK). A helical transmembrane segment spans residues 368–388 (IFMIVIPLQVLANVAYIIIES). Topologically, residues 389 to 401 (TEEGTTEYGLWKD) are extracellular. A helical membrane pass occupies residues 402-422 (SLFLVDLLCCGAILFPVVWSI). The Cytoplasmic segment spans residues 423 to 443 (RHLQEASATDGKAAINLAKLK). Residues 444 to 466 (LFRHYYVLIVCYIYFTRIIAFLL) form a helical membrane-spanning segment. Residues 467–475 (KFAVPFQWK) lie on the Extracellular side of the membrane. A helical membrane pass occupies residues 476–495 (WLYQLLDETATLVFFVLTGY). Over 496–551 (KFRPASDNPYLQLSQEEDDLEMESVVTTSGVMENMKKVKKVSNGAVEPQGSWEGTA) the chain is Cytoplasmic.

Belongs to the LU7TM family. Post-translationally, cleaved by FURIN to yield two fragments that remain associated via a disulfide bond. As to expression, widely expressed. Not detected in the duodenum, nor in the exocrine pancreas.

The protein resides in the cell membrane. Its subcellular location is the golgi apparatus. The protein localises to the trans-Golgi network membrane. In terms of biological role, has been proposed to act as a receptor for neuronostatin, a peptide derived from the somatostatin/SST precursor. Involved in blood sugar regulation through the induction of glucagon in response to low glucose. This Rattus norvegicus (Rat) protein is Protein GPR107 (Gpr107).